Consider the following 92-residue polypeptide: DNA-directed RNA polymerase subunit Rpo11 (92 aa).

It belongs to the archaeal Rpo11/eukaryotic RPB11/RPC19 RNA polymerase subunit family. Part of the RNA polymerase complex.

The protein localises to the cytoplasm. It catalyses the reaction RNA(n) + a ribonucleoside 5'-triphosphate = RNA(n+1) + diphosphate. In terms of biological role, DNA-dependent RNA polymerase (RNAP) catalyzes the transcription of DNA into RNA using the four ribonucleoside triphosphates as substrates. The sequence is that of DNA-directed RNA polymerase subunit Rpo11 from Methanosarcina barkeri (strain Fusaro / DSM 804).